The following is a 339-amino-acid chain: Phenylalanine--tRNA ligase alpha subunit (339 aa).

Mg(2+) is bound at residue E254.

Belongs to the class-II aminoacyl-tRNA synthetase family. Phe-tRNA synthetase alpha subunit type 1 subfamily. In terms of assembly, tetramer of two alpha and two beta subunits. Mg(2+) is required as a cofactor.

It is found in the cytoplasm. The catalysed reaction is tRNA(Phe) + L-phenylalanine + ATP = L-phenylalanyl-tRNA(Phe) + AMP + diphosphate + H(+). The chain is Phenylalanine--tRNA ligase alpha subunit from Caldanaerobacter subterraneus subsp. tengcongensis (strain DSM 15242 / JCM 11007 / NBRC 100824 / MB4) (Thermoanaerobacter tengcongensis).